The sequence spans 696 residues: Probable E3 ubiquitin ligase complex SCF subunit sconB (696 aa).

Residues 1-12 (MDAHELSFRDGH) show a composition bias toward basic and acidic residues. The tract at residues 1–72 (MDAHELSFRD…HSFNTQKPIR (72 aa)) is disordered. The segment covering 55-69 (PGSTQDKPHSFNTQK) has biased composition (polar residues). The F-box domain occupies 193–239 (IDFLTALPPEISFKILCYLDTTSLCKAAQVSRRWRALADDDVVWHRM). The tract at residues 290-314 (SATIETAAAGSKRKPESGKEDTAMV) is disordered. The span at 302-313 (RKPESGKEDTAM) shows a compositional bias: basic and acidic residues. WD repeat units follow at residues 365–402 (GHSN…ELRT), 405–444 (GHQS…STYS), 446–482 (HRGG…TCLL), 484–525 (GHTD…RTFH), 579–622 (DTPS…CLRT), 623–662 (FFGH…CERT), and 665–696 (GHSG…SFQT). The tract at residues 554–596 (NVSVTSGDSPAASPQALPGFDGQTSDTPSSAFGPAFDDGRPSP) is disordered.

Belongs to the WD repeat MET30/SCONB/SCON-2 family. In terms of assembly, component of the SCF(sconB) E3 ubiquitin ligase complex.

It participates in protein modification; protein ubiquitination. In terms of biological role, component of the SCF(sconB) E3 ubiquitin ligase complex involved in the regulation of sulfur metabolite repression, probably by mediating the inactivation or degradation of the metR transcription factor. In Aspergillus fumigatus (strain ATCC MYA-4609 / CBS 101355 / FGSC A1100 / Af293) (Neosartorya fumigata), this protein is Probable E3 ubiquitin ligase complex SCF subunit sconB (sconB).